An 853-amino-acid polypeptide reads, in one-letter code: DNA mismatch repair protein MutS (853 aa).

616–623 (GPNMGGKS) is an ATP binding site.

It belongs to the DNA mismatch repair MutS family.

This protein is involved in the repair of mismatches in DNA. It is possible that it carries out the mismatch recognition step. This protein has a weak ATPase activity. The sequence is that of DNA mismatch repair protein MutS from Erwinia tasmaniensis (strain DSM 17950 / CFBP 7177 / CIP 109463 / NCPPB 4357 / Et1/99).